Consider the following 347-residue polypeptide: Probable G-protein coupled receptor 148 (347 aa).

At 1 to 51 (MGDELAPCPVGTTAWPALIQLISKTPCMPQAASNTSLGLGDLRVPSSMLYW) the chain is on the extracellular side. The N-linked (GlcNAc...) asparagine glycan is linked to Asn-34. Residues 52-72 (LFLPSSLLAAATLAVSPLLLV) form a helical membrane-spanning segment. Residues 73-85 (TILRNQRLRQEPH) are Cytoplasmic-facing. Residues 86-106 (YLLPANILLSDLAYILLHMLI) form a helical membrane-spanning segment. Over 107–130 (SSSSLGGWELGRMACGILTDAVFA) the chain is Extracellular. Residues 131–151 (ACTSTILSFTAIVLHTYLAVI) traverse the membrane as a helical segment. The Cytoplasmic segment spans residues 152–165 (HPLRYLSFMSHGAA). A helical membrane pass occupies residues 166 to 186 (WKAVALIWLVACCFPTFLIWL). Topologically, residues 187–214 (SKWQDAQLEEQGASYILPPSMGTQPGCG) are extracellular. The helical transmembrane segment at 215 to 235 (LLVIVTYTSILCVLFLCTALI) threads the bilayer. At 236-261 (ANCFWRIYAEAKTSGIWGQGYSRARG) the chain is on the cytoplasmic side. The chain crosses the membrane as a helical span at residues 262 to 282 (TLLIHSVLITLYVSTGVVFSL). The Extracellular portion of the chain corresponds to 283–299 (DMVLTRYHHIDSGTHTW). Residues 300–322 (LLAANSEVLMMLPRAMLTYLYLL) traverse the membrane as a helical segment. The Cytoplasmic segment spans residues 323–347 (RYRQLLGMVRGHLPSRRHQAIFTIS).

This sequence belongs to the G-protein coupled receptor 1 family. Expression restricted to nervous system and testis. Is also detected in several tumors types, most notably prostate cancer.

The protein localises to the cell membrane. Functionally, orphan receptor. The sequence is that of Probable G-protein coupled receptor 148 (GPR148) from Homo sapiens (Human).